Reading from the N-terminus, the 316-residue chain is uncharacterized protein (316 aa).

Positions 1 to 56 (MATLSDVAKKANVSKMTVSRVINHPETVTDELKKLVHSAMKELNYIPNYAARALVQ) constitute an HTH lacI-type domain. Residues 4–23 (LSDVAKKANVSKMTVSRVIN) constitute a DNA-binding region (H-T-H motif).

This is an uncharacterized protein from Bacillus subtilis (strain 168).